The following is a 612-amino-acid chain: 1,8-cineole synthase, chloroplastic (612 aa).

A chloroplast-targeting transit peptide spans 1-52; that stretch reads MALVCGAPLASRSCLNKSLISSTHELKPLRRTILPTLRWKSATPSINMCLTT. Positions 363, 367, and 515 each coordinate Mg(2+). Residues 363–367 carry the DDXXD motif motif; that stretch reads DDIYD.

It belongs to the terpene synthase family. Tpsd subfamily. Requires Mg(2+) as cofactor. Mn(2+) is required as a cofactor.

The protein resides in the plastid. The protein localises to the chloroplast. It carries out the reaction (2E)-geranyl diphosphate + H2O = 1,8-cineole + diphosphate. The protein operates within terpene metabolism; oleoresin biosynthesis. In terms of biological role, terpene synthase (TPS) involved in the biosynthesis of monoterpene natural products included in conifer oleoresin secretions and volatile emissions; these compounds contribute to biotic and abiotic stress defense against herbivores and pathogens. Catalyzes the conversion of (2E)-geranyl diphosphate (GPP) to 1,8-cineole. This chain is 1,8-cineole synthase, chloroplastic, found in Picea glauca (White spruce).